Reading from the N-terminus, the 531-residue chain is Acyl-CoA ligase azaF (531 aa).

An AMP-binding site is contributed by 188-199 (RLFSSGTTGLPK). Residues 449 to 525 (EVEGVLRNHP…DAIPRNASGK (77 aa)) are AMP-binding.

This sequence belongs to the ATP-dependent AMP-binding enzyme family.

It participates in secondary metabolite biosynthesis. Functionally, acyl-CoA ligase; part of the gene cluster that mediates the biosynthesis of azaphilones, a class of fungal metabolites characterized by a highly oxygenated pyrano-quinone bicyclic core and exhibiting a broad range of bioactivities. In the first step, the non-reducing polyketide synthase azaA forms the hexaketide precursor from successive condensations of five malonyl-CoA units, presumably with a simple acetyl-CoA starter unit. The reactive polyketide chain then undergoes a PT-mediated C2-C7 cyclization to afford the aromatic ring and is eventually released as an aldehyde through the R-domain. The putative ketoreductase azaE is proposed to catalyze the reduction of the terminal ketone resulting in the early culture product FK17-P2a. The monooxygenase azaH was demonstrated to be the only enzyme required to convert FK17-P2a to azanigerone E. AzaH first hydroxylates the benzaldehyde intermediate FK17-P2a at C4, which triggers the formation of the pyran-ring to afford azanigerone E. In parallel, the 2,4-dimethylhexanoyl chain is synthesized by the HR-PKS azaB and is proposed to be transferred to the C4-hydroxyl of azanigerone E by the acyltransferase azaD directly from the ACP domain of azaB. Alternatively, the 2,4-dimethyl-hexanoyl chain may be offloaded from the HR-PKS as a carboxylic acid and converted to an acyl-CoA by azaF. The resulting acyl-CoA molecule could then be taken up as a substrate by AzaD to form azanigerone B. To yield the carboxylic acid substituent in azanigerone A, the hydroxypropyl side chain of azanigerone B would need to undergo a C-C oxidative cleavage catalyzed by cytochrome P450 AzaI. AzaI is proposed to act on a vicinal diol that leads to a C-C bond scission either through an alkoxyradical intermediate or a peroxy complex. In the biosynthesis of azanigerone A, azanigerone B first undergoes hydroxylation at C10, possibly catalyzed by one of the two FAD-dependent monooxygenases encoded in the cluster, azaG or azaL, resulting in the vicinal diol azanigerone C. Oxidative cleavage of azanigerone C by azaI would yield the corresponding aldehyde derivative of azanigerone A. Finally, the dehydrogenase azaJ is proposed to convert the aldehyde functional group into the carboxylic acid, completing the conversion from azanigerone B to azanigerone A. Alternatively, the oxidation of aldehyde to carboxylic acid may be catalyzed by the same P450 enzyme azaI via consecutive oxidation or by endogenous alcohol dehydrogenase. This Aspergillus niger (strain ATCC 1015 / CBS 113.46 / FGSC A1144 / LSHB Ac4 / NCTC 3858a / NRRL 328 / USDA 3528.7) protein is Acyl-CoA ligase azaF.